A 372-amino-acid chain; its full sequence is MSKAFGLLRQICQSILAESSQSPADLEEKKEEDSNMKREQPRERPRAWDYPHGLVGLHNIGQTCCLNSLIQVFVMNVDFTRILKRITVPRGADEQRRSVPFQMLLLLEKMQDSRQKAVRPLELAYCLQKCNVPLFVQHDAAQLYLKLWNLIKDQITDVHLVERLQALYTIRVKDSLICVDCAMESSRNSSMLTLPLSLFDVDSKPLKTLEDALHCFFQPRELSSKSKCFCENCGKKTRGKQVLKLTHLPQTLTIHLMRFSIRNSQTRKICHSLYFPQSLDFSQILPMKRESCDAEEQSGGQYELFAVIAHVGMADSGHYCVYIRNAVDGKWFCFNDSNICLVSWEDIQCTYGNPNYHWQETAYLLVYMKMEC.

Positions 19-45 (SSQSPADLEEKKEEDSNMKREQPRERP) are disordered. Residues 26 to 45 (LEEKKEEDSNMKREQPRERP) show a composition bias toward basic and acidic residues. The segment at 36 to 51 (MKREQPRERPRAWDYP) is mediates interaction with IFNAR2. A mediates interaction with STAT2 region spans residues 51–112 (PHGLVGLHNI…MLLLLEKMQD (62 aa)). The 316-residue stretch at 55–370 (VGLHNIGQTC…TAYLLVYMKM (316 aa)) folds into the USP domain. The active-site Nucleophile is cysteine 64. Residues 303–312 (ELFAVIAHVG) form a mediates interaction with STAT2 and necessary for the negative regulation of the type I IFN signaling pathway region. The interval 313-372 (MADSGHYCVYIRNAVDGKWFCFNDSNICLVSWEDIQCTYGNPNYHWQETAYLLVYMKMEC) is mediates interaction with IFNAR2. The active-site Proton acceptor is the histidine 318.

It belongs to the peptidase C19 family. In terms of assembly, interacts with STAT2; the interaction is direct. Interacts with IFNAR2; indirectly via STAT2, it negatively regulates the assembly of the ternary interferon-IFNAR1-IFNAR2 complex and inhibits type I interferon signaling. Interacts with STING1. Interacts with USP20.

It is found in the cytoplasm. Its subcellular location is the nucleus. It catalyses the reaction Thiol-dependent hydrolysis of ester, thioester, amide, peptide and isopeptide bonds formed by the C-terminal Gly of ubiquitin (a 76-residue protein attached to proteins as an intracellular targeting signal).. In terms of biological role, interferon-induced ISG15-specific protease that plays a crucial role for maintaining a proper balance of ISG15-conjugated proteins in cells. Regulates protein ISGylation by efficiently cleaving ISG15 conjugates linked via isopeptide bonds. Regulates T-cell activation and T-helper 17 (Th17) cell differentiation by deubiquitinating TAK1, likely to keep TAK1-TAB complexes in steady conditions. In turn, restricts activation of NF-kappa-B, NFAT, and JNK as well as expression of IL2 in T-cells after TCR activation. Acts as a molecular adapter with USP20 to promote innate antiviral response through deubiquitinating STING1. Involved also in the negative regulation of the inflammatory response triggered by type I interferon. Upon recruitment by STAT2 to the type I interferon receptor subunit IFNAR2 interferes with the assembly of the ternary interferon-IFNAR1-IFNAR2 complex and acts as a negative regulator of the type I interferon signaling pathway. Functionally, has enzymatic activity similar to isoform 1 and interferes with type I interferon signaling. Major deISGylation enzyme for nuclear proteins. The chain is Ubl carboxyl-terminal hydrolase 18 (USP18) from Homo sapiens (Human).